The chain runs to 118 residues: Large ribosomal subunit protein bL20 (118 aa).

This sequence belongs to the bacterial ribosomal protein bL20 family.

Functionally, binds directly to 23S ribosomal RNA and is necessary for the in vitro assembly process of the 50S ribosomal subunit. It is not involved in the protein synthesizing functions of that subunit. The protein is Large ribosomal subunit protein bL20 of Pseudomonas entomophila (strain L48).